The sequence spans 472 residues: Serine incorporator 3 (472 aa).

Over 1–95 (MGAVLGVFSL…KECDVLVRYK (95 aa)) the chain is Extracellular. An N-linked (GlcNAc...) asparagine glycan is attached at Asn-34. A helical membrane pass occupies residues 96 to 116 (AVYRISFALAVFFFAFSLLML). The Cytoplasmic segment spans residues 117–131 (NVKTSKDPRAAIHNG). Residues 132 to 152 (FWFFKIAAIVGVMVGSFYIPG) form a helical membrane-spanning segment. Residues 153–158 (GHFNTA) lie on the Extracellular side of the membrane. The chain crosses the membrane as a helical span at residues 159 to 179 (WFVIGMVGAAFFILIQLVLLV). The Cytoplasmic portion of the chain corresponds to 180–202 (DFAHSWNESWVNRMEEGNPKCWY). A helical transmembrane segment spans residues 203–223 (AALLSVTSLFYILSIIFAGLL). Topologically, residues 224–238 (YTYYTKPDGCTENKF) are extracellular. Residues 239-259 (FISFNLILCVVISVLSIHPKI) traverse the membrane as a helical segment. Over 260–328 (QEHQPRSGLL…APTPAVPLQS (69 aa)) the chain is Cytoplasmic. A helical transmembrane segment spans residues 329–349 (GPSLNKENFIGLLVFVLSLSY). Topologically, residues 350-405 (SSIRNSSNSQVSKLTLSGSDSVILRDTAANGASDEEDGRPRRAVDNEREGVQYNYS) are extracellular. Asn-354 carries N-linked (GlcNAc...) asparagine glycosylation. Phosphoserine is present on Ser-370. Asn-403 carries N-linked (GlcNAc...) asparagine glycosylation. A helical membrane pass occupies residues 406-426 (MFHLMLCSASLYIMMTLTNWY). At 427-445 (SPDANFQSMTSKWPAVWVK) the chain is on the cytoplasmic side. The helical transmembrane segment at 446-466 (ISSSWVCLLLYVWTLVAPLVL) threads the bilayer. Topologically, residues 467–472 (TNRDFS) are extracellular.

It belongs to the TDE1 family. In terms of processing, N-glycosylated.

Its subcellular location is the cell membrane. The protein resides in the golgi apparatus membrane. It carries out the reaction a 1,2-diacyl-sn-glycero-3-phospho-L-serine(in) = a 1,2-diacyl-sn-glycero-3-phospho-L-serine(out). It catalyses the reaction a 1,2-diacyl-sn-glycero-3-phosphocholine(in) = a 1,2-diacyl-sn-glycero-3-phosphocholine(out). The enzyme catalyses a 1,2-diacyl-sn-glycero-3-phosphoethanolamine(in) = a 1,2-diacyl-sn-glycero-3-phosphoethanolamine(out). Functionally, restriction factor required to restrict infectivity of gammaretroviruses: acts by inhibiting an early step of viral infection. Impairs the penetration of the viral particle into the cytoplasm. Non-ATP-dependent, non-specific lipid transporter for phosphatidylserine, phosphatidylcholine, and phosphatidylethanolamine. Functions as a scramblase that flips lipids in both directions across the membrane. Phospholipid scrambling results in gammaretroviral surface exposure of phosphatidylserine and loss of membrane asymmetry, which leads to loss of infectivity. The chain is Serine incorporator 3 (SERINC3) from Bos taurus (Bovine).